The sequence spans 630 residues: A-type voltage-gated potassium channel KCND2 (630 aa).

Over 1 to 184 the chain is Cytoplasmic; the sequence is MAAGVAAWLP…FENPHTSTMA (184 aa). Residues 2 to 20 are interaction with KCNIP1, KCNIP2, and other family members; that stretch reads AAGVAAWLPFARAAAIGWM. Thr-38 bears the Phosphothreonine mark. Residues 71-90 are interaction with KCNIP1; sequence ERDFFYHPETQQYFFDRDPD. His-105, Cys-111, Cys-132, and Cys-133 together coordinate Zn(2+). The chain crosses the membrane as a helical span at residues 185–206; it reads LVFYYVTGFFIAVSVIANVVET. Residues 207 to 226 are Extracellular-facing; sequence VPCGSSPGHIKELPCGERYA. A helical transmembrane segment spans residues 227-249; the sequence is VAFFCLDTACVMIFTVEYLLRLA. Residues 250-256 are Cytoplasmic-facing; sequence AAPSRYR. The chain crosses the membrane as a helical span at residues 257–281; sequence FVRSVMSIIDVVAILPYYIGLVMTD. Residues 282–287 lie on the Extracellular side of the membrane; that stretch reads NEDVSG. A helical; Voltage-sensor membrane pass occupies residues 288–307; that stretch reads AFVTLRVFRVFRIFKFSRHS. Residues 308–321 lie on the Cytoplasmic side of the membrane; the sequence is QGLRILGYTLKSCA. An S4-S5 linker region spans residues 308-321; the sequence is QGLRILGYTLKSCA. Residues 322–345 form a helical membrane-spanning segment; it reads SELGFLLFSLTMAIIIFATVMFYA. At 346–357 the chain is on the extracellular side; that stretch reads EKGSSASKFTSI. Positions 358–369 form an intramembrane region, helical; it reads PAAFWYTIVTMT. Thr-370, Leu-371, Gly-372, and Tyr-373 together coordinate K(+). The Selectivity filter signature appears at 370–375; that stretch reads TLGYGD. An intramembrane segment occupies 370–377; that stretch reads TLGYGDMV. At 378–380 the chain is on the extracellular side; the sequence is PKT. A helical transmembrane segment spans residues 381–403; sequence IAGKIFGSICSLSGVLVIALPVP. The Cytoplasmic segment spans residues 404 to 630; that stretch reads VIVSNFSRIY…GGNIVRVSAL (227 aa). At Ser-438 the chain carries Phosphoserine. A required for dendritic targeting region spans residues 474–489; it reads FETQHHHLLHCLEKTT. The important for normal channel activation and inactivation, for interaction with KCNIP2, and probably other family members as well stretch occupies residues 474 to 630; the sequence is FETQHHHLLH…GGNIVRVSAL (157 aa). Ser-548, Ser-552, Ser-572, and Ser-575 each carry phosphoserine. Residues 600 to 623 form a disordered region; that stretch reads IPTPPVTTPEGDDRPESPEYSGGN. A phosphothreonine mark is found at Thr-602 and Thr-607. Residue Ser-616 is modified to Phosphoserine. The PDZ-binding motif lies at 627–630; that stretch reads VSAL.

The protein belongs to the potassium channel family. D (Shal) (TC 1.A.1.2) subfamily. Kv4.2/KCND2 sub-subfamily. Homotetramer or heterotetramer with KCND1 or KCND3. Associates with the regulatory subunits KCNIP1, KCNIP2, KCNIP3 and KCNIP4. Interacts with DPP6, DPP10, DLG4 and DLG1. In vivo, probably exists as heteromeric complex containing variable proportions of KCND1, KCND2, KCND3, KCNIP1, KCNIP2, KCNIP3, KCNIP4, DPP6 and DPP10. The tetrameric channel can associate with up to four regulatory subunits, such as KCNIP2 or KCNIP4. Interaction with KCNIP3 promotes tetramerization and formation of a functional potassium channel. Interaction with four KCNIP4 chains does not reduce interaction with DPP10. Probably part of a complex consisting of KCNIP1, KCNIP2 isoform 3 and KCND2. Interacts with FLNA and FLNC. Interacts with NCS1/FREQ. Identified in a complex with cAMP-dependent protein kinase (PKA), CAV3, AKAP6 and KCND3 in cardiac myocytes. Interacts (via S1 and S2 helices) with DPP6; this interaction stabilizes the conformation of the S1-S2 helices and facilitates S4 conformational change, including S4 sliding up and down, thereby accelerating activation, inactivation, and recovery. In terms of processing, phosphorylation at Ser-438 in response to MAPK activation is increased in stimulated dendrites. Interaction with KCNIP2 and DPP6 propomtes phosphorylation by PKA at Ser-552. Phosphorylation at Ser-552 has no effect on interaction with KCNIP3, but is required for the regulation of channel activity by KCNIP3. Phosphorylation at Ser-552 leads to KCND2 internalization. Phosphorylated by MAPK in response to signaling via the metabotropic glutamate receptor GRM5. Phosphorylation at Ser-616 is required for the down-regulation of neuronal A-type currents in response to signaling via GRM5. As to expression, detected in brain frontal cortex.

It localises to the cell membrane. Its subcellular location is the cell projection. The protein resides in the dendrite. It is found in the synapse. The protein localises to the perikaryon. It localises to the postsynaptic cell membrane. Its subcellular location is the dendritic spine. The protein resides in the sarcolemma. It is found in the cell junction. The protein localises to the membrane. It localises to the caveola. The catalysed reaction is K(+)(in) = K(+)(out). Its function is as follows. Voltage-gated potassium channel that mediates transmembrane potassium transport in excitable membranes, primarily in the brain. Mediates the major part of the dendritic A-type current I(SA) in brain neurons. This current is activated at membrane potentials that are below the threshold for action potentials. It regulates neuronal excitability, prolongs the latency before the first spike in a series of action potentials, regulates the frequency of repetitive action potential firing, shortens the duration of action potentials and regulates the back-propagation of action potentials from the neuronal cell body to the dendrites. Contributes to the regulation of the circadian rhythm of action potential firing in suprachiasmatic nucleus neurons, which regulates the circadian rhythm of locomotor activity. Functions downstream of the metabotropic glutamate receptor GRM5 and plays a role in neuronal excitability and in nociception mediated by activation of GRM5. Mediates the transient outward current I(to) in rodent heart left ventricle apex cells, but not in human heart, where this current is mediated by another family member. Forms tetrameric potassium-selective channels through which potassium ions pass in accordance with their electrochemical gradient. The channel alternates between opened and closed conformations in response to the voltage difference across the membrane. Can form functional homotetrameric channels and heterotetrameric channels that contain variable proportions of KCND2 and KCND3; channel properties depend on the type of pore-forming alpha subunits that are part of the channel. In vivo, membranes probably contain a mixture of heteromeric potassium channel complexes. Interaction with specific isoforms of the regulatory subunits KCNIP1, KCNIP2, KCNIP3 or KCNIP4 strongly increases expression at the cell surface and thereby increases channel activity; it modulates the kinetics of channel activation and inactivation, shifts the threshold for channel activation to more negative voltage values, shifts the threshold for inactivation to less negative voltages and accelerates recovery after inactivation. Likewise, interaction with DPP6 or DPP10 promotes expression at the cell membrane and regulates both channel characteristics and activity. Upon depolarization, the channel goes from a resting closed state (C state) to an activated but non-conducting state (C* state), from there, the channel may either inactivate (I state) or open (O state). The polypeptide is A-type voltage-gated potassium channel KCND2 (Oryctolagus cuniculus (Rabbit)).